We begin with the raw amino-acid sequence, 262 residues long: Probable aminoglycoside 3'-phosphotransferase (262 aa).

Aspartate 187 functions as the Proton acceptor in the catalytic mechanism.

It belongs to the aminoglycoside phosphotransferase family.

The catalysed reaction is kanamycin A + ATP = kanamycin 3'-phosphate + ADP + H(+). The chain is Probable aminoglycoside 3'-phosphotransferase (ymdC) from Lactococcus lactis subsp. lactis (strain IL1403) (Streptococcus lactis).